Consider the following 155-residue polypeptide: Endoribonuclease YbeY (155 aa).

H114, H118, and H124 together coordinate Zn(2+).

It belongs to the endoribonuclease YbeY family. Zn(2+) serves as cofactor.

The protein resides in the cytoplasm. Its function is as follows. Single strand-specific metallo-endoribonuclease involved in late-stage 70S ribosome quality control and in maturation of the 3' terminus of the 16S rRNA. The sequence is that of Endoribonuclease YbeY from Proteus mirabilis (strain HI4320).